We begin with the raw amino-acid sequence, 156 residues long: Cellulose synthase operon protein D (156 aa).

It functions in the pathway glycan metabolism; bacterial cellulose biosynthesis. In terms of biological role, may have a major role in the perfection of crystallization, involved either in the pore structure itself or in the organization of the pores within the linear array of terminal synthesizing complexes (TCs). The chain is Cellulose synthase operon protein D from Komagataeibacter sucrofermentans (strain ATCC 700178 / DSM 15973 / CECT 7291 / JCM 9730 / LMG 18788 / BPR 2001) (Acetobacter xylinus subsp. sucrofermentans).